The chain runs to 666 residues: Phosphoenolpyruvate carboxykinase (ATP) (666 aa).

Disordered regions lie at residues 1-68 (MATP…AHSP) and 91-132 (ASLT…HPAA). The span at 48-58 (APTTPNRSAPT) shows a compositional bias: polar residues. Over residues 109 to 123 (KGEAAAQGAPSTPRA) the composition is skewed to low complexity. Residue 364-371 (GLSGTGKT) participates in ATP binding.

It belongs to the phosphoenolpyruvate carboxykinase (ATP) family.

The protein resides in the cytoplasm. It catalyses the reaction oxaloacetate + ATP = phosphoenolpyruvate + ADP + CO2. It participates in carbohydrate biosynthesis; gluconeogenesis. The chain is Phosphoenolpyruvate carboxykinase (ATP) from Zea mays (Maize).